The following is a 240-amino-acid chain: Regulatory protein RecX (240 aa).

Belongs to the RecX family.

It localises to the cytoplasm. In terms of biological role, modulates RecA activity. The protein is Regulatory protein RecX of Lacticaseibacillus paracasei (strain ATCC 334 / BCRC 17002 / CCUG 31169 / CIP 107868 / KCTC 3260 / NRRL B-441) (Lactobacillus paracasei).